A 414-amino-acid chain; its full sequence is Isocitrate dehydrogenase [NADP] cytoplasmic (414 aa).

Residue S2 is modified to N-acetylserine. Y42 is subject to Phosphotyrosine. Position 75-77 (75-77) interacts with NADP(+); the sequence is TIT. Residue T77 coordinates substrate. An N6-acetyllysine modification is found at K81. Position 82 (R82) interacts with NADP(+). Substrate is bound by residues 94-100 and R109; that span reads SPNGTIR. Residue K126 is modified to N6-succinyllysine. Positions 132 and 212 each coordinate substrate. 3 positions are modified to N6-acetyllysine: K224, K233, and K243. D252 provides a ligand contact to Mn(2+). Position 260 (K260) interacts with NADP(+). 2 residues coordinate Mn(2+): D275 and D279. 310–315 contributes to the NADP(+) binding site; sequence GTVTRH. K321 carries the N6-acetyllysine modification. N328 provides a ligand contact to NADP(+). S389 is subject to Phosphoserine. Residue K400 is modified to N6-succinyllysine.

The protein belongs to the isocitrate and isopropylmalate dehydrogenases family. Homodimer. It depends on Mg(2+) as a cofactor. Mn(2+) serves as cofactor. In terms of processing, acetylation at Lys-374 dramatically reduces catalytic activity.

The protein resides in the cytoplasm. Its subcellular location is the cytosol. It is found in the peroxisome. It carries out the reaction D-threo-isocitrate + NADP(+) = 2-oxoglutarate + CO2 + NADPH. In terms of biological role, catalyzes the NADP(+)-dependent oxidative decarboxylation of isocitrate (D-threo-isocitrate) to 2-ketoglutarate (2-oxoglutarate), which is required by other enzymes such as the phytanoyl-CoA dioxygenase. Plays a critical role in the generation of NADPH, an important cofactor in many biosynthesis pathways. May act as a corneal epithelial crystallin and may be involved in maintaining corneal epithelial transparency. This Homo sapiens (Human) protein is Isocitrate dehydrogenase [NADP] cytoplasmic (IDH1).